A 712-amino-acid chain; its full sequence is DNA ligase (712 aa).

Residues 53–57 (DAEFD), 103–104 (SL), and glutamate 133 contribute to the NAD(+) site. Lysine 135 (N6-AMP-lysine intermediate) is an active-site residue. NAD(+) is bound by residues arginine 156, glutamate 196, lysine 315, and lysine 339. The Zn(2+) site is built by cysteine 433, cysteine 436, cysteine 452, and cysteine 458. The BRCT domain occupies 622–711 (SIERTLEGLS…PERDAEDGEP (90 aa)).

The protein belongs to the NAD-dependent DNA ligase family. LigA subfamily. Mg(2+) serves as cofactor. Requires Mn(2+) as cofactor.

It catalyses the reaction NAD(+) + (deoxyribonucleotide)n-3'-hydroxyl + 5'-phospho-(deoxyribonucleotide)m = (deoxyribonucleotide)n+m + AMP + beta-nicotinamide D-nucleotide.. DNA ligase that catalyzes the formation of phosphodiester linkages between 5'-phosphoryl and 3'-hydroxyl groups in double-stranded DNA using NAD as a coenzyme and as the energy source for the reaction. It is essential for DNA replication and repair of damaged DNA. The sequence is that of DNA ligase from Mycolicibacterium gilvum (strain PYR-GCK) (Mycobacterium gilvum (strain PYR-GCK)).